We begin with the raw amino-acid sequence, 364 residues long: Valine dehydrogenase (364 aa).

The active site involves lysine 91. 191-197 contacts NAD(+); sequence GVGKVGH.

This sequence belongs to the Glu/Leu/Phe/Val dehydrogenases family. In terms of assembly, homodimer.

It localises to the cytoplasm. It catalyses the reaction L-valine + NAD(+) + H2O = 3-methyl-2-oxobutanoate + NH4(+) + NADH + H(+). Its pathway is amino-acid degradation; L-valine degradation. Its activity is regulated as follows. Inhibited by pyridoxal 5'-phosphate (PLP). In terms of biological role, oxidative deamination of branched-chain amino acids. Oxidizes L-valine and L-alpha-aminobutyric acid efficiently, and L-alanine and L-isoleucine less efficiently. D-valine and L-glutamate were not substrates for the enzyme. The catabolism of valine is the major source of fatty acid precursors for macrolide biosynthesis and a vital source of antibiotic precursors. This chain is Valine dehydrogenase, found in Streptomyces albus (strain ATCC 21838 / DSM 41398 / FERM P-419 / JCM 4703 / NBRC 107858).